The sequence spans 123 residues: Histone H2B (123 aa).

Residues 1 to 30 form a disordered region; it reads MPPKTSGKAAKKAGKAQKNITKTDKKKKRK. N-methylproline; partial is present on proline 2. Lysine 44 carries the post-translational modification N6-succinyllysine. The O-linked (GlcNAc) serine glycan is linked to serine 110. Lysine 114 and lysine 118 each carry N6-succinyllysine. Lysine 118 is covalently cross-linked (Glycyl lysine isopeptide (Lys-Gly) (interchain with G-Cter in ubiquitin)).

It belongs to the histone H2B family. As to quaternary structure, the nucleosome is a histone octamer containing two molecules each of H2A, H2B, H3 and H4 assembled in one H3-H4 heterotetramer and two H2A-H2B heterodimers. The octamer wraps approximately 147 bp of DNA. In terms of processing, phosphorylated by the catalytic component of the Dbf4-dependent kinase (DDK) complex Cdc7. Post-translationally, monoubiquitination of Lys-118 by Bre1 gives a specific tag for epigenetic transcriptional activation and is also prerequisite for histone H3 'Lys-4' and 'Lys-79' methylation. Deubiquitination of Lys-118 by the SAGA complex is involved in activating transcription of a large subset of genes. Methylation at Pro-2 increases upon heat shock. In terms of processing, glcNAcylation at Ser-110 promotes monoubiquitination of Lys-118. It fluctuates in response to extracellular glucose, and associates with transcribed genes.

The protein localises to the nucleus. Its subcellular location is the chromosome. Core component of nucleosome. Nucleosomes wrap and compact DNA into chromatin, limiting DNA accessibility to the cellular machineries which require DNA as a template. Histones thereby play a central role in transcription regulation, DNA repair, DNA replication and chromosomal stability. DNA accessibility is regulated via a complex set of post-translational modifications of histones, also called histone code, and nucleosome remodeling. The sequence is that of Histone H2B (His2B) from Drosophila erecta (Fruit fly).